We begin with the raw amino-acid sequence, 130 residues long: Type VII secretion system extracellular protein C (130 aa).

Belongs to the EsxC family. Forms both homodimers and heterodimers with EsxA. Homodimerization is calcium-dependent.

It is found in the secreted. The chain is Type VII secretion system extracellular protein C from Staphylococcus aureus (strain USA300).